Reading from the N-terminus, the 164-residue chain is Ribosomal RNA large subunit methyltransferase H (164 aa).

G109 contributes to the S-adenosyl-L-methionine binding site.

The protein belongs to the RNA methyltransferase RlmH family. As to quaternary structure, homodimer.

It is found in the cytoplasm. The catalysed reaction is pseudouridine(1915) in 23S rRNA + S-adenosyl-L-methionine = N(3)-methylpseudouridine(1915) in 23S rRNA + S-adenosyl-L-homocysteine + H(+). In terms of biological role, specifically methylates the pseudouridine at position 1915 (m3Psi1915) in 23S rRNA. This is Ribosomal RNA large subunit methyltransferase H from Methylobacterium radiotolerans (strain ATCC 27329 / DSM 1819 / JCM 2831 / NBRC 15690 / NCIMB 10815 / 0-1).